The sequence spans 201 residues: Achaete-scute complex protein T5 (201 aa).

Over residues 1-10 the composition is skewed to polar residues; the sequence is MALGSENHSV. Residues 1 to 32 are disordered; sequence MALGSENHSVFNDDEESSSAFNGPSVIRRNAR. Residues 24–90 form the bHLH domain; sequence PSVIRRNARE…KMAVEYIRRL (67 aa).

As to quaternary structure, efficient DNA binding requires dimerization with another bHLH protein. As to expression, l(1)SC, SC and AC strongly label the presumptive stomatogastric nervous system, while ASE is more prominent in the presumptive procephalic lobe.

In terms of biological role, AS-C proteins are involved in the determination of the neuronal precursors in the peripheral nervous system and the central nervous system. The sequence is that of Achaete-scute complex protein T5 (ac) from Drosophila melanogaster (Fruit fly).